A 2053-amino-acid chain; its full sequence is Nonribosomal peptide synthetase pboA (2053 aa).

The adenylation 1 stretch occupies residues 16–402; that stretch reads ACRDNADRPA…GRRDRVAKVR (387 aa). One can recognise a Carrier 1 domain in the interval 503 to 579; sequence RSYASVDEVI…HLITVCRERR (77 aa). Position 540 is an O-(pantetheine 4'-phosphoryl)serine (Ser540). The interval 611-896 is condensation 1; the sequence is NDPSLYCVKH…LLQSVHRTVQ (286 aa). The interval 1034–1418 is adenylation 2; the sequence is SAAARNPTNI…GRRDRQVKLR (385 aa). Positions 1515–1593 constitute a Carrier 2 domain; the sequence is VPDTSVKKII…DIVALVEGKI (79 aa). Ser1553 carries the post-translational modification O-(pantetheine 4'-phosphoryl)serine. The condensation 2 stretch occupies residues 1630 to 1981; the sequence is NSQCQSGFNV…LQLRLEYDSD (352 aa).

The protein belongs to the NRP synthetase family. Pantetheine 4'-phosphate serves as cofactor.

The protein operates within secondary metabolite biosynthesis. Nonribosomal peptide synthetase; part of the gene cluster that mediates the biosynthesis of protubonine B, a hydroxylated and diacetylated cyclo-L-Trp-L-Leu derivative. The first step of the protubonine B synthesis is performed by the nonribosomal peptide synthetase pboA that catalyzes the formation of cyclo-L-Trp-L-Leu by condensing L-Leu with L-Trp. The flavin-dependent monooxygenase pboD is responsible for hydroxylation at C-3 of the indole ring and subsequent formation of the pyrrolidine ring, leadind to protubonine D. Protubonine D is further diacetylated by two acetyltransferases, pboB and pboC, to form the final product protubonine B via protubonine C. The polypeptide is Nonribosomal peptide synthetase pboA (Aspergillus ustus).